The sequence spans 320 residues: 3-O-acetylpapaveroxine carboxylesterase CXE1 (320 aa).

Residues H72–G74 carry the Involved in the stabilization of the negatively charged intermediate by the formation of the oxyanion hole motif. Residues S158, D262, and H292 contribute to the active site.

It belongs to the 'GDXG' lipolytic enzyme family.

It carries out the reaction 3-O-acetylpapaveroxine + H2O = narcotine hemiacetal + acetate + H(+). It participates in alkaloid biosynthesis. Its function is as follows. Carboxylesterase involved in the biosynthesis of the benzylisoquinoline alkaloid noscapine. Converts 3-O-acetylpapaveroxine to papaveroxine which spontaneously rearranges to narcotine hemiacetal. The sequence is that of 3-O-acetylpapaveroxine carboxylesterase CXE1 from Papaver somniferum (Opium poppy).